The chain runs to 108 residues: uncharacterized protein (108 aa).

The segment at 75 to 94 (TPQVSSFPSSTTSLSHSCTT) is disordered. The segment covering 79-94 (SSFPSSTTSLSHSCTT) has biased composition (low complexity).

This is an uncharacterized protein from Homo sapiens (Human).